The chain runs to 97 residues: HssA/B-like protein 27 (97 aa).

This sequence belongs to the hssA/B family.

The sequence is that of HssA/B-like protein 27 (hssl27) from Dictyostelium discoideum (Social amoeba).